The primary structure comprises 108 residues: Phosphoribosyl-ATP pyrophosphatase (108 aa).

The protein belongs to the PRA-PH family.

It localises to the cytoplasm. It catalyses the reaction 1-(5-phospho-beta-D-ribosyl)-ATP + H2O = 1-(5-phospho-beta-D-ribosyl)-5'-AMP + diphosphate + H(+). Its pathway is amino-acid biosynthesis; L-histidine biosynthesis; L-histidine from 5-phospho-alpha-D-ribose 1-diphosphate: step 2/9. This Chromobacterium violaceum (strain ATCC 12472 / DSM 30191 / JCM 1249 / CCUG 213 / NBRC 12614 / NCIMB 9131 / NCTC 9757 / MK) protein is Phosphoribosyl-ATP pyrophosphatase.